We begin with the raw amino-acid sequence, 803 residues long: 3',5'-cyclic-AMP phosphodiesterase 4D (803 aa).

Positions Met1–Gly103 are disordered. Phosphoserine is present on residues His52 and His56. The segment covering Pro58–Gly85 has biased composition (pro residues). Phosphoserine occurs at positions 137, 294, 296, 343, and 370. Residues Glu338–Gln358 form a disordered region. The PDEase domain maps to Val381–Ser710. Lys382 is covalently cross-linked (Glycyl lysine isopeptide (Lys-Gly) (interchain with G-Cter in SUMO)). Catalysis depends on His457, which acts as the Proton donor. A 3',5'-cyclic AMP-binding site is contributed by His457. His457 contacts AMP. Positions 461, 497, 498, and 615 each coordinate Zn(2+). Residues Asp498, Asp615, Asn618, Gln666, and Phe669 each coordinate AMP. A Mg(2+)-binding site is contributed by Asp498. Asp498 is a binding site for Mn(2+). Gln666 and Phe669 together coordinate 3',5'-cyclic AMP. Disordered regions lie at residues Ser705–Gly724 and Glu732–Thr803. The span at Cys757–Ser768 shows a compositional bias: polar residues. The span at Pro774–Ser789 shows a compositional bias: acidic residues.

It belongs to the cyclic nucleotide phosphodiesterase family. PDE4 subfamily. In terms of assembly, homodimer for the long isoforms. Isoforms with truncated N-termini are monomeric. Binds ARRB2. Isoform 33 is part of a ternary complex containing PRKAR2A, PRKAR2B and AKAP9. Identified in a complex composed of RYR1, PDE4D, PKA, FKBP1A and protein phosphatase 1 (PP1). Interacts with PDE4DIP. Isoform 5 interacts (via N-terminal region) with SHANK2 (via proline-rich region); the interaction is increased in a PKA-dependent manner. Isoform 33, isoform 4, isoform 7, isoform 8 and isoform 9 but not isoform 32 and isoform 6 interact with SHANK2. Isoform 31 interacts weakly with SHANK2. It depends on Zn(2+) as a cofactor. Mg(2+) serves as cofactor. Requires Mn(2+) as cofactor. In terms of processing, isoform 1 and isoform 9 are rapidly activated by PKA through phosphorylation. Long isoforms that share a conserved PKA phosphorylation site in the N-terminus are also activated. Post-translationally, sumoylation of long isoforms by PIAS4 augments their activation by PKA phosphorylation and represses their inhibition by ERK phosphorylation. Expressed in epithelial cells. Isoform 33, isoform 4, isoform 5 and isoform 9 are expressed in brain. Isoform 33, isoform 5, isoform 8 and isoform 9 are expressed in heart (at protein level). Isoform 4 and isoform 6 are strongly expressed in cortex and cerebellum. Isoform 7 is strongly expressed in cortex and testis; weakly expressed in kidney, lung, spleen and cerebellum. Isoform 8 is strongly expressed in lung, heart and liver. Isoform 31, isoform 32, isoform 33, isoform 5 and isoform 9 are widely distributed.

It localises to the apical cell membrane. The protein localises to the cytoplasm. Its subcellular location is the membrane. The protein resides in the cytoskeleton. It is found in the microtubule organizing center. It localises to the centrosome. The catalysed reaction is 3',5'-cyclic AMP + H2O = AMP + H(+). Its pathway is purine metabolism; 3',5'-cyclic AMP degradation; AMP from 3',5'-cyclic AMP: step 1/1. Activated by phosphatidic acid. Inhibited by rolipram. Hydrolyzes the second messenger cAMP, which is a key regulator of many important physiological processes. The polypeptide is 3',5'-cyclic-AMP phosphodiesterase 4D (Pde4d) (Rattus norvegicus (Rat)).